Consider the following 75-residue polypeptide: Penaeidin-3n (75 aa).

The N-terminal stretch at M1–G19 is a signal peptide. Pyrrolidone carboxylic acid is present on Q20. 2 cysteine pairs are disulfide-bonded: C44–C59 and C48–C66. S74 carries the post-translational modification Serine amide.

The protein belongs to the penaeidin family.

The protein localises to the cytoplasmic granule. Its function is as follows. Antibacterial and antifungal activity. Presents chitin-binding activity. The polypeptide is Penaeidin-3n (Penaeus setiferus (Atlantic white shrimp)).